The following is a 248-amino-acid chain: Proteasome subunit alpha type-7 (248 aa).

An O-linked (GlcNAc) serine glycan is attached at Ser130. Tyr153 carries the post-translational modification Phosphotyrosine. An N6-acetyllysine modification is found at Lys227.

Belongs to the peptidase T1A family. As to quaternary structure, the 26S proteasome consists of a 20S proteasome core and two 19S regulatory subunits. The 20S proteasome core is a barrel-shaped complex made of 28 subunits that are arranged in four stacked rings. The two outer rings are each formed by seven alpha subunits, and the two inner rings are formed by seven beta subunits. The proteolytic activity is exerted by three beta-subunits PSMB5, PSMB6 and PSMB7. PSMA7 interacts directly with the PSMG1-PSMG2 heterodimer which promotes 20S proteasome assembly. Interacts with HIF1A. Interacts with RAB7A. Interacts with PRKN. Interacts with ABL1 and ABL2. Interacts with EMAP2. Interacts with MAVS.

It is found in the cytoplasm. Its subcellular location is the nucleus. Its function is as follows. Component of the 20S core proteasome complex involved in the proteolytic degradation of most intracellular proteins. This complex plays numerous essential roles within the cell by associating with different regulatory particles. Associated with two 19S regulatory particles, forms the 26S proteasome and thus participates in the ATP-dependent degradation of ubiquitinated proteins. The 26S proteasome plays a key role in the maintenance of protein homeostasis by removing misfolded or damaged proteins that could impair cellular functions, and by removing proteins whose functions are no longer required. Associated with the PA200 or PA28, the 20S proteasome mediates ubiquitin-independent protein degradation. This type of proteolysis is required in several pathways including spermatogenesis (20S-PA200 complex) or generation of a subset of MHC class I-presented antigenic peptides (20S-PA28 complex). Inhibits the transactivation function of HIF-1A under both normoxic and hypoxia-mimicking conditions. The interaction with EMAP2 increases the proteasome-mediated HIF-1A degradation under the hypoxic conditions. Plays a role in hepatitis C virus internal ribosome entry site-mediated translation. Mediates nuclear translocation of the androgen receptor (AR) and thereby enhances androgen-mediated transactivation. Promotes MAVS degradation and thereby negatively regulates MAVS-mediated innate immune response. The protein is Proteasome subunit alpha type-7 (PSMA7) of Bos taurus (Bovine).